The primary structure comprises 333 residues: Beta-ketoacyl-[acyl-carrier-protein] synthase III (333 aa).

Active-site residues include C122 and H258. Positions 259–263 (QANER) are ACP-binding. The active site involves N289.

The protein belongs to the thiolase-like superfamily. FabH family. As to quaternary structure, homodimer.

Its subcellular location is the cytoplasm. It catalyses the reaction butanoyl-CoA + malonyl-[ACP] + H(+) = 3-oxohexanoyl-[ACP] + CO2 + CoA. It carries out the reaction malonyl-[ACP] + acetyl-CoA + H(+) = 3-oxobutanoyl-[ACP] + CO2 + CoA. The enzyme catalyses 2-methylpropanoyl-CoA + malonyl-[ACP] + H(+) = 4-methyl-3-oxopentanoyl-[ACP] + CO2 + CoA. It participates in lipid metabolism; fatty acid biosynthesis. With respect to regulation, inhibited by thiolactomycin. In terms of biological role, catalyzes the condensation reaction of fatty acid synthesis by the addition to an acyl acceptor of two carbons from malonyl-ACP. Catalyzes the first condensation reaction which initiates fatty acid synthesis and may therefore play a role in governing the total rate of fatty acid production. Possesses both acetoacetyl-ACP synthase and acetyl transacylase activities. Utilizes both straight and branched-chain acyl-CoAs. The order of reactivity with the various acyl-CoA substrates at saturation is butanoyl-CoA &gt; acetyl-CoA &gt; 2-methylpropanoyl-CoA (or isobutyryl-CoA). Not involved in tetracenomycin C (TCM C) biosynthesis. The sequence is that of Beta-ketoacyl-[acyl-carrier-protein] synthase III (fabH) from Streptomyces glaucescens.